The following is a 200-amino-acid chain: Pyridoxine/pyridoxamine 5'-phosphate oxidase (200 aa).

FMN contacts are provided by residues 49 to 54, 64 to 65, Arg70, Lys71, and Gln93; these read RMLLLK and YT. Lys54 is a substrate binding site. Substrate is bound by residues Tyr111, Arg115, and Ser119. FMN is bound by residues 128-129 and Trp173; that span reads QS. 179–181 contacts substrate; sequence RLH. Arg183 contributes to the FMN binding site.

The protein belongs to the pyridoxamine 5'-phosphate oxidase family. As to quaternary structure, homodimer. Requires FMN as cofactor.

The enzyme catalyses pyridoxamine 5'-phosphate + O2 + H2O = pyridoxal 5'-phosphate + H2O2 + NH4(+). It carries out the reaction pyridoxine 5'-phosphate + O2 = pyridoxal 5'-phosphate + H2O2. The protein operates within cofactor metabolism; pyridoxal 5'-phosphate salvage; pyridoxal 5'-phosphate from pyridoxamine 5'-phosphate: step 1/1. Its pathway is cofactor metabolism; pyridoxal 5'-phosphate salvage; pyridoxal 5'-phosphate from pyridoxine 5'-phosphate: step 1/1. Functionally, catalyzes the oxidation of either pyridoxine 5'-phosphate (PNP) or pyridoxamine 5'-phosphate (PMP) into pyridoxal 5'-phosphate (PLP). This is Pyridoxine/pyridoxamine 5'-phosphate oxidase from Gluconobacter oxydans (strain 621H) (Gluconobacter suboxydans).